We begin with the raw amino-acid sequence, 573 residues long: Putative ferric-chelate reductase 1 (573 aa).

A helical transmembrane segment spans residues 4-24; it reads VCKSPQRLLFVLVSCFGLVQS. In terms of domain architecture, Reelin spans 15-181; the sequence is LVSCFGLVQS…GTTGTSTTPA (167 aa). A DOMON domain is found at 213–328; sequence GCYFVAVQAS…NEYYLMIAAG (116 aa). N-linked (GlcNAc...) asparagine glycans are attached at residues Asn286 and Asn300. The Cytochrome b561 domain occupies 332–532; it reads QGNIQFHTNK…YILQDLNLRA (201 aa). Residues 369–389 traverse the membrane as a helical segment; it reads AHGCLMLISWMATGSIGMIIA. Heme b-binding residues include His370 and His411. 2 helical membrane-spanning segments follow: residues 414-434 and 441-461; these read LMTLSIIATAIAFIIVFVSAG and HPVLGCLVMILSLIQPIVAAF. Residues His441 and His477 each coordinate heme b. 3 helical membrane passes run 479-499, 506-526, and 550-570; these read CNAFAIKCLAVAAIFTGLALF, GWMLKVMGGYLAWEALMYILQ, and ILLFLFIIGNLAFLIALLVGI.

Belongs to the FRRS1 family. It depends on heme b as a cofactor.

It localises to the membrane. In terms of biological role, putative ferric-chelate reductases reduce Fe(3+) to Fe(2+) before its transport from the endosome to the cytoplasm. The polypeptide is Putative ferric-chelate reductase 1 (frrs1) (Danio rerio (Zebrafish)).